The chain runs to 423 residues: F-box/LRR-repeat protein 2 (423 aa).

In terms of domain architecture, F-box spans 9-55 (GLINKKLPKELLLRIFSFLDIVTLCRCAQISKAWNILALDGSNWQRV). 13 LRR repeats span residues 61–87 (QTDV…SLRG), 88–113 (CIGV…NLNG), 114–139 (CTKI…DLTS), 140–165 (CVSV…NLSW), 166–191 (CDQI…LLRG), 192–217 (CTQL…NLQS), 218–243 (CSRI…CLSG), 244–269 (CSNL…EAAR), 270–295 (CSHL…DLEE), 296–321 (CVLI…SLSH), 322–350 (CELI…ELDN), 351–375 (CLLV…ELYD), and 376–401 (CQQV…AYFA). The tract at residues 80–90 (LRKLSLRGCIG) is interaction with Calmodulin. Lysine 201 participates in a covalent cross-link: Glycyl lysine isopeptide (Lys-Gly) (interchain with G-Cter in ubiquitin). Threonine 404 is subject to Phosphothreonine; by GSK3-beta. A lipid anchor (S-geranylgeranyl cysteine) is attached at cysteine 420. The CAAX motif signature appears at 420-423 (CVIL).

In terms of assembly, part of the SCF (SKP1-CUL1-F-box) E3 ubiquitin-protein ligase complex SCF(FBXL2) composed of CUL1, SKP1, RBX1 and FBXL2. Interacts with calmodulin; may antagonize substrate ubiquitination by SCF(FBXL2). May interact with PIK3R1. Interacts with PTPN13. Post-translationally, phosphorylated by GSK-beta (GSK3B), promoting recognition by FBXO3, leading to its ubiquitination by the SCF(FBXO3) complex. In terms of processing, ubiquitinated at Lys-201 by the SCF(FBXO3) complex in response to lipopolysaccharide (LPS), leading to its degradation by the proteasome.

Its subcellular location is the membrane. It participates in protein modification; protein ubiquitination. Functionally, calcium-activated substrate recognition component of the SCF (SKP1-cullin-F-box protein) E3 ubiquitin-protein ligase complex, SCF(FBXL2), which mediates the ubiquitination and subsequent proteasomal degradation of target proteins. Unlike many F-box proteins, FBXL2 does not seem to target phosphodegron within its substrates but rather calmodulin-binding motifs and is thereby antagonized by calmodulin. This is the case for the cyclins CCND2 and CCND3 which polyubiquitination and subsequent degradation are inhibited by calmodulin. Through CCND2 and CCND3 degradation induces cell-cycle arrest in G(0). SCF(FBXL2) also mediates PIK3R2 ubiquitination and proteasomal degradation thereby regulating phosphatidylinositol 3-kinase signaling and autophagy. PCYT1A monoubiquitination by SCF(FBXL2) and subsequent degradation regulates synthesis of phosphatidylcholine, which is utilized for formation of membranes and of pulmonary surfactant. The SCF(FBXL2) complex acts as a regulator of inflammation by mediating ubiquitination and degradation of TRAF proteins (TRAF1, TRAF2, TRAF3, TRAF4, TRAF5 and TRAF6). The SCF(FBXL2) complex acts as a negative regulator of the NLRP3 inflammasome by mediating ubiquitination and degradation of NLRP3. The protein is F-box/LRR-repeat protein 2 of Mus musculus (Mouse).